A 216-amino-acid polypeptide reads, in one-letter code: Uracil phosphoribosyltransferase (216 aa).

GTP is bound by residues Arg32, Arg41, 75–78 (MGKI), and Lys77. Ser82 carries the phosphoserine modification. Arg85 is a 5-phospho-alpha-D-ribose 1-diphosphate binding site. GTP is bound at residue Arg102. Arg110 lines the 5-phospho-alpha-D-ribose 1-diphosphate pocket. Arg131 is a binding site for GTP. Residues Asp137 and 137–145 (DPMLATGGS) contribute to the 5-phospho-alpha-D-ribose 1-diphosphate site. Tyr201 is a binding site for D-ribose 5-phosphate. Uracil is bound by residues Leu202 and 207–209 (GDF). Residue Asp208 coordinates 5-phospho-alpha-D-ribose 1-diphosphate.

Belongs to the UPRTase family. Requires Mg(2+) as cofactor.

It carries out the reaction UMP + diphosphate = 5-phospho-alpha-D-ribose 1-diphosphate + uracil. It participates in pyrimidine metabolism; UMP biosynthesis via salvage pathway; UMP from uracil: step 1/1. With respect to regulation, allosterically activated by GTP. Functionally, catalyzes the conversion of uracil and 5-phospho-alpha-D-ribose 1-diphosphate (PRPP) to UMP and diphosphate in the pyrimidine salvage pathway. The protein is Uracil phosphoribosyltransferase (FUR1) of Saccharomyces cerevisiae (strain ATCC 204508 / S288c) (Baker's yeast).